The primary structure comprises 235 residues: Large ribosomal subunit protein uL1 (235 aa).

Belongs to the universal ribosomal protein uL1 family. In terms of assembly, part of the 50S ribosomal subunit.

Functionally, binds directly to 23S rRNA. The L1 stalk is quite mobile in the ribosome, and is involved in E site tRNA release. In terms of biological role, protein L1 is also a translational repressor protein, it controls the translation of the L11 operon by binding to its mRNA. This chain is Large ribosomal subunit protein uL1, found in Methylobacterium sp. (strain 4-46).